Here is a 102-residue protein sequence, read N- to C-terminus: NADH-quinone oxidoreductase subunit K (102 aa).

3 helical membrane passes run 5-25 (LGHY…GIFL), 30-50 (IIVI…NLVA), and 62-82 (VFAL…LAVL).

This sequence belongs to the complex I subunit 4L family. NDH-1 is composed of 14 different subunits. Subunits NuoA, H, J, K, L, M, N constitute the membrane sector of the complex.

It is found in the cell inner membrane. The catalysed reaction is a quinone + NADH + 5 H(+)(in) = a quinol + NAD(+) + 4 H(+)(out). In terms of biological role, NDH-1 shuttles electrons from NADH, via FMN and iron-sulfur (Fe-S) centers, to quinones in the respiratory chain. The immediate electron acceptor for the enzyme in this species is believed to be ubiquinone. Couples the redox reaction to proton translocation (for every two electrons transferred, four hydrogen ions are translocated across the cytoplasmic membrane), and thus conserves the redox energy in a proton gradient. In Bradyrhizobium sp. (strain BTAi1 / ATCC BAA-1182), this protein is NADH-quinone oxidoreductase subunit K.